We begin with the raw amino-acid sequence, 434 residues long: Tungsten-containing formylmethanofuran dehydrogenase 2 subunit B (434 aa).

U120 is a non-standard amino acid (selenocysteine).

The protein belongs to the FwdB family. This enzyme is composed of six subunits FwdA, FwdC, FwdD, FwdE, FwdF and FwdG. W-bis(molybdopterin guanine dinucleotide) is required as a cofactor.

It carries out the reaction N-formylmethanofuran + 2 oxidized [2Fe-2S]-[ferredoxin] + H2O = methanofuran + 2 reduced [2Fe-2S]-[ferredoxin] + CO2 + H(+). It functions in the pathway one-carbon metabolism; methanogenesis from CO(2); 5,10-methenyl-5,6,7,8-tetrahydromethanopterin from CO(2): step 1/3. Functionally, catalyzes the reversible oxidation of CO(2) and methanofuran (MFR) to N-formylmethanofuran (CHO-MFR). This enzyme is oxygen-labile. The sequence is that of Tungsten-containing formylmethanofuran dehydrogenase 2 subunit B (fwdB) from Methanococcus maripaludis (strain DSM 14266 / JCM 13030 / NBRC 101832 / S2 / LL).